Reading from the N-terminus, the 428-residue chain is uncharacterized protein (428 aa).

The segment at 1–49 is disordered; it reads MRTQTFPPSSSSSRTTHPKKNRHSSNSSSMALVTPAKSSTGAAPKQSSQ. Residues 24 to 49 show a composition bias toward polar residues; it reads SSNSSSMALVTPAKSSTGAAPKQSSQ.

This is an uncharacterized protein from Caenorhabditis elegans.